The sequence spans 153 residues: Lipoprotein signal peptidase (153 aa).

The next 3 membrane-spanning stretches (helical) occupy residues 7 to 27 (LIII…LNNY), 59 to 79 (NLIR…IFYM), and 93 to 113 (SIII…GSVI). Residues Asp-114 and Asp-132 contribute to the active site. A helical membrane pass occupies residues 123–143 (WHFPVFNFADISIFIGFLILI).

Belongs to the peptidase A8 family.

The protein resides in the cell membrane. The catalysed reaction is Release of signal peptides from bacterial membrane prolipoproteins. Hydrolyzes -Xaa-Yaa-Zaa-|-(S,diacylglyceryl)Cys-, in which Xaa is hydrophobic (preferably Leu), and Yaa (Ala or Ser) and Zaa (Gly or Ala) have small, neutral side chains.. The protein operates within protein modification; lipoprotein biosynthesis (signal peptide cleavage). This protein specifically catalyzes the removal of signal peptides from prolipoproteins. The polypeptide is Lipoprotein signal peptidase (Wigglesworthia glossinidia brevipalpis).